The following is a 593-amino-acid chain: UvrABC system protein C (593 aa).

The region spanning 14–91 (DSPGCYLHKD…IQENMPKYNI (78 aa)) is the GIY-YIG domain. The UVR domain occupies 196 to 231 (NKIVNGLTEKMKSAAMTMEFERAAEYRDLIEAISLL).

Belongs to the UvrC family. In terms of assembly, interacts with UvrB in an incision complex.

It is found in the cytoplasm. The UvrABC repair system catalyzes the recognition and processing of DNA lesions. UvrC both incises the 5' and 3' sides of the lesion. The N-terminal half is responsible for the 3' incision and the C-terminal half is responsible for the 5' incision. This is UvrABC system protein C from Streptococcus agalactiae serotype Ia (strain ATCC 27591 / A909 / CDC SS700).